Here is a 721-residue protein sequence, read N- to C-terminus: Solute carrier family 12 member 8 (721 aa).

11 helical membrane passes run 53 to 73, 84 to 104, 115 to 135, 136 to 156, 174 to 194, 196 to 216, 247 to 267, 283 to 303, 321 to 341, 374 to 394, and 397 to 417; these read FGTW…VVLF, GVLL…VTVL, IGSG…VGGT, IGVL…TGFA, ISLA…KWII, LQLL…IGSF, FFTV…GFNM, LAAI…LGAI, LVGG…CMGG, PVAA…IGQV, and LAPI…YSYF. 2 disordered regions span residues 473–505 and 533–580; these read PNHT…KQTL and NESQ…STVA. Over residues 553–565 the composition is skewed to acidic residues; it reads TESDEPDSEEDVD. Transmembrane regions (helical) follow at residues 606-626 and 628-648; these read FLGA…YALV and LGVA…LNPG.

This sequence belongs to the SLC12A transporter family.

The protein resides in the membrane. Cation/chloride cotransporter. The sequence is that of Solute carrier family 12 member 8 (slc12a8) from Xenopus laevis (African clawed frog).